The primary structure comprises 246 residues: Small ribosomal subunit protein uS3 (246 aa).

Residues 38–106 (IRQYLNARLA…DVQINIYEIR (69 aa)) form the KH type-2 domain. The segment at 218-246 (VAKNQSRRPNAQGGNNRGGDRNRRRKGNR) is disordered.

The protein belongs to the universal ribosomal protein uS3 family. As to quaternary structure, part of the 30S ribosomal subunit. Forms a tight complex with proteins S10 and S14.

Binds the lower part of the 30S subunit head. Binds mRNA in the 70S ribosome, positioning it for translation. In Porphyromonas gingivalis (strain ATCC 33277 / DSM 20709 / CIP 103683 / JCM 12257 / NCTC 11834 / 2561), this protein is Small ribosomal subunit protein uS3.